Consider the following 35-residue polypeptide: SLIEFGKMITEETNRPVFPYEATIVVCDCGNGNGS.

It belongs to the phospholipase A2 family. Group II subfamily. As to quaternary structure, monomer. Ca(2+) serves as cofactor. Contains 14 disulfide bonds. As to expression, expressed by the venom gland.

The protein resides in the secreted. The enzyme catalyses a 1,2-diacyl-sn-glycero-3-phosphocholine + H2O = a 1-acyl-sn-glycero-3-phosphocholine + a fatty acid + H(+). Functionally, snake venom phospholipase A2 (PLA2) that is the first competitive blocker of nicotinic acetylcholine receptors (nAChRs). Competes with alpha-bungarotoxin for binding to nAChRs and acetylcholine binding proteins (AChBPs) and blocks acetylcholine-elicited current. PLA2 catalyzes the calcium-dependent hydrolysis of the 2-acyl groups in 3-sn-phosphoglycerides. The chain is Phospholipase A2 bitanarin from Bitis arietans (African puff adder).